An 89-amino-acid chain; its full sequence is Small ribosomal subunit protein uS15 (89 aa).

This sequence belongs to the universal ribosomal protein uS15 family. As to quaternary structure, part of the 30S ribosomal subunit. Forms a bridge to the 50S subunit in the 70S ribosome, contacting the 23S rRNA.

One of the primary rRNA binding proteins, it binds directly to 16S rRNA where it helps nucleate assembly of the platform of the 30S subunit by binding and bridging several RNA helices of the 16S rRNA. Its function is as follows. Forms an intersubunit bridge (bridge B4) with the 23S rRNA of the 50S subunit in the ribosome. The protein is Small ribosomal subunit protein uS15 of Rhizobium etli (strain CIAT 652).